The chain runs to 310 residues: Tagatose-6-phosphate kinase (310 aa).

Belongs to the carbohydrate kinase PfkB family. LacC subfamily.

The enzyme catalyses D-tagatofuranose 6-phosphate + ATP = D-tagatofuranose 1,6-bisphosphate + ADP + H(+). The protein operates within carbohydrate metabolism; D-tagatose 6-phosphate degradation; D-glyceraldehyde 3-phosphate and glycerone phosphate from D-tagatose 6-phosphate: step 1/2. This Streptococcus agalactiae serotype V (strain ATCC BAA-611 / 2603 V/R) protein is Tagatose-6-phosphate kinase.